A 39-amino-acid polypeptide reads, in one-letter code: Natriuretic peptide HsNP-a (39 aa).

A propeptide spanning residues 1–8 (SGSKTAKI) is cleaved from the precursor. Cysteines 12 and 28 form a disulfide.

Belongs to the natriuretic peptide family. Expressed by the venom gland.

It is found in the secreted. Its function is as follows. Snake venom natriuretic peptide that targets both NPR1 and NPR2. Exhibits hypotensive and vasodepressor activities. In Hoplocephalus stephensii (Stephens's banded snake), this protein is Natriuretic peptide HsNP-a.